The chain runs to 61 residues: AGVDPLVPLRQAMFNYFQVPDRLGILTHLYRIAEGAQQGDPLSRSWELLKEGFLLALTQGR.

Tyr30 carries the post-translational modification Phosphotyrosine. Ser45 is a binding site for ATP.

This sequence belongs to the eukaryotic-type N-acetylglucosamine kinase family. In terms of assembly, homodimer.

It carries out the reaction N-acetyl-D-glucosamine + ATP = N-acetyl-D-glucosamine 6-phosphate + ADP + H(+). The enzyme catalyses aldehydo-N-acetyl-D-mannosamine + ATP = aldehydo-N-acetyl-D-mannosamine 6-phosphate + ADP + H(+). It catalyses the reaction N-acetyl-D-muramoyl-L-alanyl-D-isoglutamine + ATP = 6-O-phospho-N-acetyl-D-muramoyl-L-alanyl-D-isoglutamine + ADP + H(+). The protein operates within amino-sugar metabolism; N-acetylneuraminate degradation. Functionally, converts endogenous N-acetylglucosamine (GlcNAc), a major component of complex carbohydrates, from lysosomal degradation or nutritional sources into GlcNAc 6-phosphate. Also has N-acetylmannosamine (ManNAc) kinase activity. Involved in the N-glycolylneuraminic acid (Neu5Gc) degradation pathway. Also involved in innate immunity by promoting detection of bacterial peptidoglycan by NOD2: acts by catalyzing phosphorylation of muramyl dipeptide (MDP), a fragment of bacterial peptidoglycan, to generate 6-O-phospho-muramyl dipeptide, which acts as a direct ligand for NOD2. The polypeptide is N-acetyl-D-glucosamine kinase (Mesocricetus auratus (Golden hamster)).